Here is a 138-residue protein sequence, read N- to C-terminus: Large-conductance mechanosensitive channel (138 aa).

Transmembrane regions (helical) follow at residues 15–35 (VDLA…NSIV), 38–58 (IIMP…MFIQ), and 80–100 (GNFI…FLVV).

This sequence belongs to the MscL family. Homopentamer.

It is found in the cell inner membrane. Functionally, channel that opens in response to stretch forces in the membrane lipid bilayer. May participate in the regulation of osmotic pressure changes within the cell. The polypeptide is Large-conductance mechanosensitive channel (Brucella ovis (strain ATCC 25840 / 63/290 / NCTC 10512)).